The chain runs to 507 residues: UDP-N-acetylmuramoyl-L-alanyl-D-glutamate--2,6-diaminopimelate ligase (507 aa).

Ser-32 is a binding site for UDP-N-acetyl-alpha-D-muramoyl-L-alanyl-D-glutamate. Residue 117–123 (GTNGKTT) participates in ATP binding. UDP-N-acetyl-alpha-D-muramoyl-L-alanyl-D-glutamate is bound by residues 159 to 160 (TT), Ser-186, Gln-192, and Arg-194. Lys-226 carries the N6-carboxylysine modification. Meso-2,6-diaminopimelate contacts are provided by residues Arg-400, 424–427 (DNPR), Gly-475, and Glu-479. The Meso-diaminopimelate recognition motif signature appears at 424–427 (DNPR).

This sequence belongs to the MurCDEF family. MurE subfamily. Mg(2+) serves as cofactor. Carboxylation is probably crucial for Mg(2+) binding and, consequently, for the gamma-phosphate positioning of ATP.

It is found in the cytoplasm. It carries out the reaction UDP-N-acetyl-alpha-D-muramoyl-L-alanyl-D-glutamate + meso-2,6-diaminopimelate + ATP = UDP-N-acetyl-alpha-D-muramoyl-L-alanyl-gamma-D-glutamyl-meso-2,6-diaminopimelate + ADP + phosphate + H(+). It functions in the pathway cell wall biogenesis; peptidoglycan biosynthesis. In terms of biological role, catalyzes the addition of meso-diaminopimelic acid to the nucleotide precursor UDP-N-acetylmuramoyl-L-alanyl-D-glutamate (UMAG) in the biosynthesis of bacterial cell-wall peptidoglycan. This Prochlorococcus marinus (strain MIT 9313) protein is UDP-N-acetylmuramoyl-L-alanyl-D-glutamate--2,6-diaminopimelate ligase.